The following is a 290-amino-acid chain: 4-diphosphocytidyl-2-C-methyl-D-erythritol kinase (290 aa).

Lys-13 is an active-site residue. Position 93-103 (93-103 (PVQAGLGGGSA)) interacts with ATP. The active site involves Asp-135.

This sequence belongs to the GHMP kinase family. IspE subfamily.

It carries out the reaction 4-CDP-2-C-methyl-D-erythritol + ATP = 4-CDP-2-C-methyl-D-erythritol 2-phosphate + ADP + H(+). The protein operates within isoprenoid biosynthesis; isopentenyl diphosphate biosynthesis via DXP pathway; isopentenyl diphosphate from 1-deoxy-D-xylulose 5-phosphate: step 3/6. Its function is as follows. Catalyzes the phosphorylation of the position 2 hydroxy group of 4-diphosphocytidyl-2C-methyl-D-erythritol. This is 4-diphosphocytidyl-2-C-methyl-D-erythritol kinase from Desulfitobacterium hafniense (strain Y51).